A 281-amino-acid polypeptide reads, in one-letter code: Bifunctional protein FolD (281 aa).

NADP(+)-binding positions include 165-167 (GRG), threonine 192, and valine 233.

Belongs to the tetrahydrofolate dehydrogenase/cyclohydrolase family. In terms of assembly, homodimer.

The enzyme catalyses (6R)-5,10-methylene-5,6,7,8-tetrahydrofolate + NADP(+) = (6R)-5,10-methenyltetrahydrofolate + NADPH. It catalyses the reaction (6R)-5,10-methenyltetrahydrofolate + H2O = (6R)-10-formyltetrahydrofolate + H(+). Its pathway is one-carbon metabolism; tetrahydrofolate interconversion. Its function is as follows. Catalyzes the oxidation of 5,10-methylenetetrahydrofolate to 5,10-methenyltetrahydrofolate and then the hydrolysis of 5,10-methenyltetrahydrofolate to 10-formyltetrahydrofolate. The protein is Bifunctional protein FolD of Mycobacterium ulcerans (strain Agy99).